Consider the following 438-residue polypeptide: Putative B3 domain-containing protein Os04g0676650 (438 aa).

The segment covering 1-11 (MADARGSSSSS) has biased composition (low complexity). 2 disordered regions span residues 1–30 (MADA…DFVG) and 225–285 (SSSH…MNQN). Residues 12-30 (GDGGGGEGKGGAGHGDFVG) show a composition bias toward gly residues. Positions 258–269 (RRSDMESEKNDD) are enriched in basic and acidic residues. Residues 272–285 (DQTPVSEPPSMNQN) are compositionally biased toward polar residues. The TF-B3 DNA-binding region spans 302-404 (LRKELTNSDV…KFVVRGEKAI (103 aa)).

It localises to the nucleus. This chain is Putative B3 domain-containing protein Os04g0676650, found in Oryza sativa subsp. japonica (Rice).